We begin with the raw amino-acid sequence, 503 residues long: MNFFPWLTIIVVFPIFAGSIVFFLPHKGNRVIRWYTLCICILELLITTYTFCFHFQVDDPLIQLEETYKWINFFDCHWRLGIDGLSVGPILLTGFITTLATLAARPVTRDSRLFHFLMLAMYSGQIGLFASRDLFLFFIMWELELIPVYLLLSMWGGKKRLYSATKFILYTAGGSIFLLMGVLGLTLYGSNEPTFNFETSVNQSYPAALEIIFYIGFFIAFAVKSPILPLHTWLPDTHGEAHYSTCMLLAGILLKMGAYGLIRINMELFPHAHSLFSPYLVIVGTIQMIYAALTSLGQRNLKRRIAYSSVSHMGFIIIGIGSMTDTGLNGALLQIISHGFIGAALFFLAGTTYDRIRLVYLDEMGGIAIQMPKIFTMFSSFSMASLALPGMSGFVAELLVFFGIISAKKYLFMSKILISFVMAIGIILTPIYSLSMLRQMFYGYKLFNAPNSSFLDSGPRELFLSISILLPVIGIGMYPDFVLSLSVEKVEVILSHFFYRQVL.

Transmembrane regions (helical) follow at residues 3-23 (FFPW…IVFF), 37-57 (LCIC…HFQV), 84-104 (GLSV…TLAA), 113-130 (LFHF…GLFA), 134-154 (LFLF…LLSM), 167-187 (FILY…GLTL), 208-228 (ALEI…SPIL), 242-262 (HYST…YGLI), 274-294 (SLFS…AALT), 305-325 (IAYS…SMTD), 330-350 (GALL…FLAG), 385-405 (SLAL…FGII), 416-436 (ILIS…SLSM), and 462-482 (LFLS…PDFV).

This sequence belongs to the complex I subunit 4 family.

The protein resides in the plastid. It is found in the chloroplast thylakoid membrane. It catalyses the reaction a plastoquinone + NADH + (n+1) H(+)(in) = a plastoquinol + NAD(+) + n H(+)(out). The catalysed reaction is a plastoquinone + NADPH + (n+1) H(+)(in) = a plastoquinol + NADP(+) + n H(+)(out). The sequence is that of NAD(P)H-quinone oxidoreductase chain 4, chloroplastic from Ipomoea purpurea (Common morning glory).